A 184-amino-acid polypeptide reads, in one-letter code: Peptidoglycan-recognition protein SC2 (184 aa).

A signal peptide spans 1–20; the sequence is MANKALILLAVLFCAQAVLG. One can recognise an N-acetylmuramoyl-L-alanine amidase domain in the interval 45–169; that stretch reads SYAVIHHTAG…RQVGSTECPG (125 aa). His-50 provides a ligand contact to Zn(2+). An intrachain disulfide couples Cys-57 to Cys-63. Residues His-159 and Cys-167 each contribute to the Zn(2+) site.

Belongs to the N-acetylmuramoyl-L-alanine amidase 2 family. Requires Zn(2+) as cofactor.

The protein localises to the secreted. The enzyme catalyses Hydrolyzes the link between N-acetylmuramoyl residues and L-amino acid residues in certain cell-wall glycopeptides.. Its function is as follows. N-acetylmuramyl-L-alanine amidase involved in innate immunity by degrading bacterial peptidoglycans (PGN). Probably plays a scavenger role by digesting biologically active PGN into biologically inactive fragments. Has no direct bacteriolytic activity. The polypeptide is Peptidoglycan-recognition protein SC2 (PGRP-SC2) (Drosophila simulans (Fruit fly)).